A 707-amino-acid polypeptide reads, in one-letter code: Elongation factor G (707 aa).

The tr-type G domain occupies 8–297 (ERVRNIGIAA…AVLDYLPSPL (290 aa)). GTP-binding positions include 17–24 (AHIDAGKT), 96–100 (DTPGH), and 150–153 (NKMD).

The protein belongs to the TRAFAC class translation factor GTPase superfamily. Classic translation factor GTPase family. EF-G/EF-2 subfamily.

The protein localises to the cytoplasm. Catalyzes the GTP-dependent ribosomal translocation step during translation elongation. During this step, the ribosome changes from the pre-translocational (PRE) to the post-translocational (POST) state as the newly formed A-site-bound peptidyl-tRNA and P-site-bound deacylated tRNA move to the P and E sites, respectively. Catalyzes the coordinated movement of the two tRNA molecules, the mRNA and conformational changes in the ribosome. This chain is Elongation factor G, found in Gloeobacter violaceus (strain ATCC 29082 / PCC 7421).